Consider the following 330-residue polypeptide: tRNA U34 carboxymethyltransferase (330 aa).

Carboxy-S-adenosyl-L-methionine-binding positions include K91, W105, K110, G130, 152–154 (DPS), 181–182 (IE), M196, Y200, and R315.

This sequence belongs to the class I-like SAM-binding methyltransferase superfamily. CmoB family. In terms of assembly, homotetramer.

The enzyme catalyses carboxy-S-adenosyl-L-methionine + 5-hydroxyuridine(34) in tRNA = 5-carboxymethoxyuridine(34) in tRNA + S-adenosyl-L-homocysteine + H(+). Functionally, catalyzes carboxymethyl transfer from carboxy-S-adenosyl-L-methionine (Cx-SAM) to 5-hydroxyuridine (ho5U) to form 5-carboxymethoxyuridine (cmo5U) at position 34 in tRNAs. This chain is tRNA U34 carboxymethyltransferase, found in Shewanella frigidimarina (strain NCIMB 400).